Consider the following 102-residue polypeptide: Urease subunit beta (102 aa).

The protein belongs to the urease beta subunit family. In terms of assembly, heterotrimer of UreA (gamma), UreB (beta) and UreC (alpha) subunits. Three heterotrimers associate to form the active enzyme.

Its subcellular location is the cytoplasm. The enzyme catalyses urea + 2 H2O + H(+) = hydrogencarbonate + 2 NH4(+). Its pathway is nitrogen metabolism; urea degradation; CO(2) and NH(3) from urea (urease route): step 1/1. This Opitutus terrae (strain DSM 11246 / JCM 15787 / PB90-1) protein is Urease subunit beta.